The primary structure comprises 215 residues: Leucyl/phenylalanyl-tRNA--protein transferase (215 aa).

This sequence belongs to the L/F-transferase family.

It is found in the cytoplasm. It carries out the reaction N-terminal L-lysyl-[protein] + L-leucyl-tRNA(Leu) = N-terminal L-leucyl-L-lysyl-[protein] + tRNA(Leu) + H(+). The catalysed reaction is N-terminal L-arginyl-[protein] + L-leucyl-tRNA(Leu) = N-terminal L-leucyl-L-arginyl-[protein] + tRNA(Leu) + H(+). The enzyme catalyses L-phenylalanyl-tRNA(Phe) + an N-terminal L-alpha-aminoacyl-[protein] = an N-terminal L-phenylalanyl-L-alpha-aminoacyl-[protein] + tRNA(Phe). In terms of biological role, functions in the N-end rule pathway of protein degradation where it conjugates Leu, Phe and, less efficiently, Met from aminoacyl-tRNAs to the N-termini of proteins containing an N-terminal arginine or lysine. The chain is Leucyl/phenylalanyl-tRNA--protein transferase from Campylobacter jejuni (strain RM1221).